Reading from the N-terminus, the 304-residue chain is Fluoroacetate dehalogenase (304 aa).

The AB hydrolase-1 domain occupies 26–151 (PALLLLHGFP…FVARAYWHWY (126 aa)). The active-site Nucleophile is D104. Fluoroacetate is bound by residues R105, R108, H149, W150, and Y212. Residue H271 is the Proton acceptor of the active site.

Belongs to the AB hydrolase superfamily. Epoxide hydrolase family. Homodimer.

The enzyme catalyses a haloacetate + H2O = a halide anion + glycolate + H(+). It carries out the reaction fluoroacetate + H2O = fluoride + glycolate + H(+). Its function is as follows. Catalyzes the hydrolytic defluorination of fluoroacetate to produce glycolate. Has only very low activity towards chloroacetate and bromoacetate. The protein is Fluoroacetate dehalogenase (fac-dex) of Burkholderia sp.